We begin with the raw amino-acid sequence, 129 residues long: uncharacterized protein (129 aa).

A helical transmembrane segment spans residues Y8–I24.

The protein localises to the membrane. This is an uncharacterized protein from Rickettsia prowazekii (strain Madrid E).